Here is a 273-residue protein sequence, read N- to C-terminus: Large ribosomal subunit protein uL2 (273 aa).

The disordered stretch occupies residues 228–273 (VDHPHGGGEGKTSGGRHPVTPWGFPTKGKKTRKNKRTSKFIVKKRK). The span at 254–273 (KGKKTRKNKRTSKFIVKKRK) shows a compositional bias: basic residues.

This sequence belongs to the universal ribosomal protein uL2 family. In terms of assembly, part of the 50S ribosomal subunit. Forms a bridge to the 30S subunit in the 70S ribosome.

Its function is as follows. One of the primary rRNA binding proteins. Required for association of the 30S and 50S subunits to form the 70S ribosome, for tRNA binding and peptide bond formation. It has been suggested to have peptidyltransferase activity; this is somewhat controversial. Makes several contacts with the 16S rRNA in the 70S ribosome. The polypeptide is Large ribosomal subunit protein uL2 (Rickettsia rickettsii (strain Iowa)).